A 169-amino-acid polypeptide reads, in one-letter code: uncharacterized protein (169 aa).

This is an uncharacterized protein from Saimiriine herpesvirus 2 (strain 11) (SaHV-2).